The sequence spans 156 residues: Small ribosomal subunit protein uS7 (156 aa).

It belongs to the universal ribosomal protein uS7 family. In terms of assembly, part of the 30S ribosomal subunit. Contacts proteins S9 and S11.

Functionally, one of the primary rRNA binding proteins, it binds directly to 16S rRNA where it nucleates assembly of the head domain of the 30S subunit. Is located at the subunit interface close to the decoding center, probably blocks exit of the E-site tRNA. This is Small ribosomal subunit protein uS7 from Chlorobaculum parvum (strain DSM 263 / NCIMB 8327) (Chlorobium vibrioforme subsp. thiosulfatophilum).